Reading from the N-terminus, the 241-residue chain is Caffeoyl-CoA O-methyltransferase (241 aa).

Lys14 contacts substrate. S-adenosyl-L-methionine contacts are provided by residues Thr58, Glu80, 82 to 83 (GV), Ser88, Asp106, and Ala135. Asp158 is a substrate binding site. Asp158 contributes to the a divalent metal cation binding site. Asp160 contacts S-adenosyl-L-methionine. 2 residues coordinate a divalent metal cation: Asp184 and Asn185.

Belongs to the class I-like SAM-binding methyltransferase superfamily. Cation-dependent O-methyltransferase family. CCoAMT subfamily. Requires a divalent metal cation as cofactor.

The enzyme catalyses (E)-caffeoyl-CoA + S-adenosyl-L-methionine = (E)-feruloyl-CoA + S-adenosyl-L-homocysteine + H(+). It functions in the pathway aromatic compound metabolism; phenylpropanoid biosynthesis. Methylates caffeoyl-CoA to feruloyl-CoA and 5-hydroxyferuloyl-CoA to sinapoyl-CoA. Plays a role in the synthesis of feruloylated polysaccharides. Involved in the reinforcement of the plant cell wall. Also involved in the responding to wounding or pathogen challenge by the increased formation of cell wall-bound ferulic acid polymers. This Stellaria longipes (Longstalk starwort) protein is Caffeoyl-CoA O-methyltransferase.